The following is a 388-amino-acid chain: S-adenosylmethionine synthase (388 aa).

Position 17 (H17) interacts with ATP. Position 19 (D19) interacts with Mg(2+). E45 lines the K(+) pocket. E58 and Q101 together coordinate L-methionine. The flexible loop stretch occupies residues 101–111; sequence QSPDIGQGVDT. Residues 160–162, 226–227, D235, 241–242, A258, and K262 contribute to the ATP site; these read DGK, RF, and RK. D235 provides a ligand contact to L-methionine. K266 contacts L-methionine.

It belongs to the AdoMet synthase family. Homotetramer; dimer of dimers. Mg(2+) is required as a cofactor. K(+) serves as cofactor.

The protein resides in the cytoplasm. It carries out the reaction L-methionine + ATP + H2O = S-adenosyl-L-methionine + phosphate + diphosphate. It participates in amino-acid biosynthesis; S-adenosyl-L-methionine biosynthesis; S-adenosyl-L-methionine from L-methionine: step 1/1. Catalyzes the formation of S-adenosylmethionine (AdoMet) from methionine and ATP. The overall synthetic reaction is composed of two sequential steps, AdoMet formation and the subsequent tripolyphosphate hydrolysis which occurs prior to release of AdoMet from the enzyme. The sequence is that of S-adenosylmethionine synthase from Anaeromyxobacter sp. (strain K).